A 122-amino-acid chain; its full sequence is Small ribosomal subunit protein uS13 (122 aa).

The interval 95-122 is disordered; that stretch reads GLPVRGQRTHTNARTRKGKAKPIAGKKK.

This sequence belongs to the universal ribosomal protein uS13 family. Part of the 30S ribosomal subunit. Forms a loose heterodimer with protein S19. Forms two bridges to the 50S subunit in the 70S ribosome.

Located at the top of the head of the 30S subunit, it contacts several helices of the 16S rRNA. In the 70S ribosome it contacts the 23S rRNA (bridge B1a) and protein L5 of the 50S subunit (bridge B1b), connecting the 2 subunits; these bridges are implicated in subunit movement. Contacts the tRNAs in the A and P-sites. This Sphingopyxis alaskensis (strain DSM 13593 / LMG 18877 / RB2256) (Sphingomonas alaskensis) protein is Small ribosomal subunit protein uS13.